The following is a 130-amino-acid chain: Guanylate kinase (130 aa).

A Guanylate kinase-like domain is found at 1–130; it reads KIFEDPTTSY…EKIQSRVNEA (130 aa).

This sequence belongs to the guanylate kinase family.

It localises to the cytoplasm. The enzyme catalyses GMP + ATP = GDP + ADP. Essential for recycling GMP and indirectly, cGMP. This is Guanylate kinase (gmk) from Staphylococcus epidermidis.